We begin with the raw amino-acid sequence, 487 residues long: Betaine aldehyde dehydrogenase (487 aa).

2 residues coordinate K(+): serine 26 and aspartate 93. Position 150–152 (150–152) interacts with NAD(+); sequence GAW. The Charge relay system role is filled by lysine 162. NAD(+) contacts are provided by residues 176–179 and 229–232; these read KPSE and SVPT. Leucine 244 contacts K(+). Catalysis depends on glutamate 250, which acts as the Proton acceptor. Residues glycine 252, cysteine 284, and glutamate 384 each coordinate NAD(+). Residue cysteine 284 is the Nucleophile of the active site. Cysteine 284 is modified (cysteine sulfenic acid (-SOH)). Residues lysine 454 and glycine 457 each contribute to the K(+) site. The Charge relay system role is filled by glutamate 461.

This sequence belongs to the aldehyde dehydrogenase family. Dimer of dimers. It depends on K(+) as a cofactor.

It catalyses the reaction betaine aldehyde + NAD(+) + H2O = glycine betaine + NADH + 2 H(+). Its pathway is amine and polyamine biosynthesis; betaine biosynthesis via choline pathway; betaine from betaine aldehyde: step 1/1. Its function is as follows. Involved in the biosynthesis of the osmoprotectant glycine betaine. Catalyzes the irreversible oxidation of betaine aldehyde to the corresponding acid. The polypeptide is Betaine aldehyde dehydrogenase (Rhizobium etli (strain CIAT 652)).